Consider the following 432-residue polypeptide: Trigger factor (432 aa).

Positions 161–246 (EDRVTIDFTG…LKKVEERELP (86 aa)) constitute a PPIase FKBP-type domain.

This sequence belongs to the FKBP-type PPIase family. Tig subfamily. As to quaternary structure, homodimer and monomer. In vivo most of the ribosomes are in complex with monomeric TF. Uncomplexed TF, however, is in a monomer-dimer equilibrium with approximately two thirds of TF existing in a dimeric state.

It localises to the cytoplasm. It carries out the reaction [protein]-peptidylproline (omega=180) = [protein]-peptidylproline (omega=0). Functionally, involved in protein export. Acts as a chaperone by maintaining the newly synthesized protein in an open conformation. Functions as a peptidyl-prolyl cis-trans isomerase. This chain is Trigger factor, found in Escherichia coli O6:K15:H31 (strain 536 / UPEC).